A 170-amino-acid polypeptide reads, in one-letter code: Transmembrane protein 252 (170 aa).

Helical transmembrane passes span 8–28 (ILCA…AFFI) and 40–60 (LIAA…GIFW). The segment at 112–147 (CPAEREASGIPPPLYTETGLEFQDGNDSHPEAPPSY) is disordered.

The protein resides in the membrane. The chain is Transmembrane protein 252 (TMEM252) from Pongo abelii (Sumatran orangutan).